The primary structure comprises 150 residues: Ribonuclease HI (150 aa).

Positions 1–141 (MKSINAYTDG…VDVLARGQAM (141 aa)) constitute an RNase H type-1 domain. Mg(2+) contacts are provided by Asp9, Glu47, Asp69, and Asp133.

It belongs to the RNase H family. As to quaternary structure, monomer. Requires Mg(2+) as cofactor.

The protein localises to the cytoplasm. It catalyses the reaction Endonucleolytic cleavage to 5'-phosphomonoester.. Endonuclease that specifically degrades the RNA of RNA-DNA hybrids. This is Ribonuclease HI from Xylella fastidiosa (strain 9a5c).